We begin with the raw amino-acid sequence, 417 residues long: Gamma-glutamyl phosphate reductase (417 aa).

The protein belongs to the gamma-glutamyl phosphate reductase family.

It localises to the cytoplasm. It carries out the reaction L-glutamate 5-semialdehyde + phosphate + NADP(+) = L-glutamyl 5-phosphate + NADPH + H(+). Its pathway is amino-acid biosynthesis; L-proline biosynthesis; L-glutamate 5-semialdehyde from L-glutamate: step 2/2. Functionally, catalyzes the NADPH-dependent reduction of L-glutamate 5-phosphate into L-glutamate 5-semialdehyde and phosphate. The product spontaneously undergoes cyclization to form 1-pyrroline-5-carboxylate. The protein is Gamma-glutamyl phosphate reductase of Chlorobium phaeobacteroides (strain BS1).